The following is a 132-amino-acid chain: Small ribosomal subunit protein uS9 (132 aa).

The protein belongs to the universal ribosomal protein uS9 family.

This Mesomycoplasma hyopneumoniae (strain 232) (Mycoplasma hyopneumoniae) protein is Small ribosomal subunit protein uS9.